We begin with the raw amino-acid sequence, 545 residues long: Propane 2-monooxygenase, hydroxylase component large subunit (545 aa).

Fe cation-binding residues include E97, E127, H130, E192, E226, and H229.

It belongs to the TmoA/XamoA family. The propane 2-monooxygenase multicomponent enzyme system is composed of an electron transfer component and a monooxygenase component interacting with the effector protein PrmD. The electron transfer component is composed of a reductase (PrmB), and the monooxygenase component is formed by a large subunit (PrmA) and a small subunit (PrmC). Probably requires the presence of the chaperonin-like protein PrmG to ensure a productive folding, resulting of a soluble PrmA, which leads to the active form of PrmABCD. Fe(2+) is required as a cofactor.

It carries out the reaction propane + NADH + O2 + H(+) = propan-2-ol + NAD(+) + H2O. The enzyme catalyses phenol + NADH + O2 + H(+) = hydroquinone + NAD(+) + H2O. Component of the propane 2-monooxygenase multicomponent enzyme system which is involved in the degradation of propane via the O2-dependent hydroxylation of propane. Under acetone induction, also able to catalyze the oxidation of phenol to yield hydroquinone. This is Propane 2-monooxygenase, hydroxylase component large subunit from Gordonia sp. (strain TY-5).